Here is a 204-residue protein sequence, read N- to C-terminus: Thymidylate kinase (204 aa).

10 to 17 contributes to the ATP binding site; the sequence is GGDGAGKT.

It belongs to the thymidylate kinase family.

The catalysed reaction is dTMP + ATP = dTDP + ADP. Its function is as follows. Phosphorylation of dTMP to form dTDP in both de novo and salvage pathways of dTTP synthesis. In Cutibacterium acnes (strain DSM 16379 / KPA171202) (Propionibacterium acnes), this protein is Thymidylate kinase.